The following is a 29-amino-acid chain: Cyclotide vibi-C (29 aa).

Positions 1–29 (GLPVCGETCAFGSCYTPGCSCSWPVCTRN) form a cross-link, cyclopeptide (Gly-Asn). 3 disulfide bridges follow: Cys-5-Cys-19, Cys-9-Cys-21, and Cys-14-Cys-26.

In terms of processing, this is a cyclic peptide.

Probably participates in a plant defense mechanism. The chain is Cyclotide vibi-C from Viola biflora (Yellow wood violet).